Here is a 340-residue protein sequence, read N- to C-terminus: N-acetyl-gamma-glutamyl-phosphate reductase (340 aa).

Residue Cys-146 is part of the active site.

The protein belongs to the NAGSA dehydrogenase family. Type 1 subfamily.

Its subcellular location is the cytoplasm. It catalyses the reaction N-acetyl-L-glutamate 5-semialdehyde + phosphate + NADP(+) = N-acetyl-L-glutamyl 5-phosphate + NADPH + H(+). The protein operates within amino-acid biosynthesis; L-arginine biosynthesis; N(2)-acetyl-L-ornithine from L-glutamate: step 3/4. In terms of biological role, catalyzes the NADPH-dependent reduction of N-acetyl-5-glutamyl phosphate to yield N-acetyl-L-glutamate 5-semialdehyde. This Streptococcus thermophilus (strain ATCC BAA-491 / LMD-9) protein is N-acetyl-gamma-glutamyl-phosphate reductase.